A 342-amino-acid polypeptide reads, in one-letter code: Pre-mRNA-splicing factor 18 (342 aa).

It belongs to the PRP18 family. Interacts with the spliceosome. Part of a complex containing U4/U6 snRNPs.

Its subcellular location is the nucleus speckle. Participates in the second step of pre-mRNA splicing. The sequence is that of Pre-mRNA-splicing factor 18 (prpf18) from Danio rerio (Zebrafish).